Reading from the N-terminus, the 207-residue chain is Ribosomal RNA small subunit methyltransferase G (207 aa).

S-adenosyl-L-methionine is bound by residues G73, L78, 124–125 (VE), and R139.

It belongs to the methyltransferase superfamily. RNA methyltransferase RsmG family.

Its subcellular location is the cytoplasm. It catalyses the reaction guanosine(527) in 16S rRNA + S-adenosyl-L-methionine = N(7)-methylguanosine(527) in 16S rRNA + S-adenosyl-L-homocysteine. Its function is as follows. Specifically methylates the N7 position of guanine in position 527 of 16S rRNA. The polypeptide is Ribosomal RNA small subunit methyltransferase G (Salmonella arizonae (strain ATCC BAA-731 / CDC346-86 / RSK2980)).